We begin with the raw amino-acid sequence, 602 residues long: Proline--tRNA ligase (602 aa).

This sequence belongs to the class-II aminoacyl-tRNA synthetase family. ProS type 1 subfamily. In terms of assembly, homodimer.

It is found in the cytoplasm. It catalyses the reaction tRNA(Pro) + L-proline + ATP = L-prolyl-tRNA(Pro) + AMP + diphosphate. Functionally, catalyzes the attachment of proline to tRNA(Pro) in a two-step reaction: proline is first activated by ATP to form Pro-AMP and then transferred to the acceptor end of tRNA(Pro). As ProRS can inadvertently accommodate and process non-cognate amino acids such as alanine and cysteine, to avoid such errors it has two additional distinct editing activities against alanine. One activity is designated as 'pretransfer' editing and involves the tRNA(Pro)-independent hydrolysis of activated Ala-AMP. The other activity is designated 'posttransfer' editing and involves deacylation of mischarged Ala-tRNA(Pro). The misacylated Cys-tRNA(Pro) is not edited by ProRS. This chain is Proline--tRNA ligase, found in Thermosynechococcus vestitus (strain NIES-2133 / IAM M-273 / BP-1).